The primary structure comprises 168 residues: Transcriptional regulator MraZ (168 aa).

SpoVT-AbrB domains follow at residues 8-51 (EYNQ…GGDR) and 90-140 (ALNM…KADT).

It belongs to the MraZ family. In terms of assembly, forms oligomers.

The protein resides in the cytoplasm. The protein localises to the nucleoid. This is Transcriptional regulator MraZ from Cereibacter sphaeroides (strain ATCC 17029 / ATH 2.4.9) (Rhodobacter sphaeroides).